We begin with the raw amino-acid sequence, 201 residues long: Probable GTP-binding protein EngB (201 aa).

The EngB-type G domain occupies 22–197 (RLPEYAFIGR…LDYIDSINQE (176 aa)). GTP contacts are provided by residues 30 to 37 (GRSNVGKS), 57 to 61 (GKTQL), 75 to 78 (DLPG), 142 to 145 (TKAD), and 173 to 178 (VFITSS). Serine 37 and threonine 59 together coordinate Mg(2+).

Belongs to the TRAFAC class TrmE-Era-EngA-EngB-Septin-like GTPase superfamily. EngB GTPase family. It depends on Mg(2+) as a cofactor.

Functionally, necessary for normal cell division and for the maintenance of normal septation. The sequence is that of Probable GTP-binding protein EngB from Porphyromonas gingivalis (strain ATCC 33277 / DSM 20709 / CIP 103683 / JCM 12257 / NCTC 11834 / 2561).